The chain runs to 398 residues: Apolipoprotein L1 (398 aa).

The N-terminal stretch at 1-27 (MEGAALLRVSVLCIWMSALFLGVGVRA) is a signal peptide. Positions 35 to 47 (QQNVPSGTDTGDP) are enriched in polar residues. Positions 35–55 (QQNVPSGTDTGDPQSKPLGDW) are disordered. Asparagine 261 is a glycosylation site (N-linked (GlcNAc...) asparagine). The disordered stretch occupies residues 297–317 (PHASASRPRVTEPISAESGEQ). 2 positions are modified to phosphoserine; by FAM20C: serine 311 and serine 314.

This sequence belongs to the apolipoprotein L family. As to quaternary structure, in plasma, interacts with APOA1 and mainly associated with large high density lipoprotein particles. Post-translationally, phosphorylated by FAM20C in the extracellular medium. In terms of tissue distribution, plasma. Found on APOA-I-containing high density lipoprotein (HDL3). Expressed in pancreas, lung, prostate, liver, placenta and spleen.

The protein resides in the secreted. Its function is as follows. May play a role in lipid exchange and transport throughout the body. May participate in reverse cholesterol transport from peripheral cells to the liver. The polypeptide is Apolipoprotein L1 (APOL1) (Homo sapiens (Human)).